We begin with the raw amino-acid sequence, 313 residues long: Ribosomal RNA small subunit methyltransferase H (313 aa).

Residues 35–37 (GGH), aspartate 55, phenylalanine 79, aspartate 100, and glutamine 107 each bind S-adenosyl-L-methionine.

It belongs to the methyltransferase superfamily. RsmH family.

It localises to the cytoplasm. The enzyme catalyses cytidine(1402) in 16S rRNA + S-adenosyl-L-methionine = N(4)-methylcytidine(1402) in 16S rRNA + S-adenosyl-L-homocysteine + H(+). Its function is as follows. Specifically methylates the N4 position of cytidine in position 1402 (C1402) of 16S rRNA. The protein is Ribosomal RNA small subunit methyltransferase H of Burkholderia ambifaria (strain ATCC BAA-244 / DSM 16087 / CCUG 44356 / LMG 19182 / AMMD) (Burkholderia cepacia (strain AMMD)).